Here is a 161-residue protein sequence, read N- to C-terminus: Alpha-crystallin A chain (161 aa).

M1 is subject to N-acetylmethionine. The segment at 1–53 (MDVTIQHPWFKRALGPFYHNRLFDQFFGEGLFEYDLLPFQSLFRTVLDSGISE) is required for complex formation with BFSP1 and BFSP2. Deamidated glutamine; partial is present on residues Q6 and Q40. The 110-residue stretch at 41-150 (SLFRTVLDSG…SHSERAIPVS (110 aa)) folds into the sHSP domain. K87 bears the N6-acetyllysine mark. Residue H88 coordinates Zn(2+). N89 is modified (deamidated asparagine; partial). The Zn(2+) site is built by E90 and H95. Position 110 is a phosphoserine (S110). A Deamidated asparagine; partial modification is found at N111. Cysteines 119 and 130 form a disulfide. A Deamidated glutamine; partial modification is found at Q135. Residues 135 to 161 (QSGMDASHSERAIPVSREEKASSAPNS) form a disordered region. A compositionally biased stretch (basic and acidic residues) spans 141 to 155 (SHSERAIPVSREEKA). H142 serves as a coordination point for Zn(2+). An O-linked (GlcNAc) serine glycan is attached at S150.

Belongs to the small heat shock protein (HSP20) family. As to quaternary structure, heteromer composed of three CRYAA and one CRYAB subunits. Inter-subunit bridging via zinc ions enhances stability, which is crucial as there is no protein turn over in the lens. Can also form homodimers and homotetramers (dimers of dimers) which serve as the building blocks of homooligomers. Within homooligomers, the zinc-binding motif is created from residues of 3 different molecules. His-88 and Glu-90 from one molecule are ligands of the zinc ion, and His-95 and His-142 residues from additional molecules complete the site with tetrahedral coordination geometry. Part of a complex required for lens intermediate filament formation composed of BFSP1, BFSP2 and CRYAA. Undergoes age-dependent proteolytical cleavage at the C-terminus.

Its subcellular location is the cytoplasm. The protein localises to the nucleus. Its function is as follows. Contributes to the transparency and refractive index of the lens. In its oxidized form (absence of intramolecular disulfide bond), acts as a chaperone, preventing aggregation of various proteins under a wide range of stress conditions. Required for the correct formation of lens intermediate filaments as part of a complex composed of BFSP1, BFSP2 and CRYAA. The chain is Alpha-crystallin A chain (CRYAA) from Trichechus inunguis (Amazon manatee).